A 332-amino-acid polypeptide reads, in one-letter code: Malate dehydrogenase, cytoplasmic (332 aa).

NAD(+) is bound by residues 16-17 (QI), D43, and G90. R99 is a binding site for oxaloacetate. NAD(+) is bound by residues Q113 and N132. Residues N132, R163, H188, and S243 each contribute to the oxaloacetate site. H188 acts as the Proton acceptor in catalysis.

The protein belongs to the LDH/MDH superfamily. MDH type 2 family. In terms of assembly, homodimer.

The protein localises to the cytoplasm. It carries out the reaction (S)-malate + NAD(+) = oxaloacetate + NADH + H(+). This Medicago sativa (Alfalfa) protein is Malate dehydrogenase, cytoplasmic (CMDH).